The following is a 255-amino-acid chain: uncharacterized protein (255 aa).

The first 23 residues, 1–23 (MKRLNKLVLGIIFLFLVISITAG), serve as a signal peptide directing secretion. A lipid anchor (N-palmitoyl cysteine) is attached at Cys-24. Cys-24 carries the S-diacylglycerol cysteine lipid modification.

This sequence belongs to the staphylococcal tandem lipoprotein family.

It localises to the cell membrane. This is an uncharacterized protein from Staphylococcus aureus (strain USA300).